The chain runs to 376 residues: Polar flagellin A (376 aa).

Coiled-coil stretches lie at residues 103–128 and 310–338; these read SNSK…RIAE and FQNR…IKDT.

Belongs to the bacterial flagellin family. As to quaternary structure, heteromer of multiple flagellin subunits including FlaA, FlaB/D, FlaC, FlaE and FlaF.

It localises to the secreted. The protein resides in the bacterial flagellum. In terms of biological role, flagellin is the subunit protein which polymerizes to form the filaments of bacterial flagella. FlaA is not essential for polar flagellar synthesis and swimming motility. Homomer of FlaA is able to form a functional filament. The polypeptide is Polar flagellin A (flaA) (Vibrio parahaemolyticus serotype O3:K6 (strain RIMD 2210633)).